Reading from the N-terminus, the 122-residue chain is Large ribosomal subunit protein uL14 (122 aa).

This sequence belongs to the universal ribosomal protein uL14 family. As to quaternary structure, part of the 50S ribosomal subunit. Forms a cluster with proteins L3 and L19. In the 70S ribosome, L14 and L19 interact and together make contacts with the 16S rRNA in bridges B5 and B8.

Functionally, binds to 23S rRNA. Forms part of two intersubunit bridges in the 70S ribosome. The chain is Large ribosomal subunit protein uL14 from Rickettsia rickettsii (strain Iowa).